The following is a 73-amino-acid chain: U3-agatoxin-Ao1j (73 aa).

A signal peptide spans 1–20 (MRTIISLLLLSAMVFAVIEA). The propeptide occupies 21–34 (ISLEEGLQLFEGER). Cystine bridges form between cysteine 36–cysteine 52, cysteine 43–cysteine 57, cysteine 51–cysteine 67, and cysteine 59–cysteine 65. Serine amide is present on serine 71.

Belongs to the neurotoxin 07 (Beta/delta-agtx) family. 03 (aga-4) subfamily. Aga sub-subfamily. Expressed by the venom gland.

The protein localises to the secreted. Its function is as follows. Insecticidal neurotoxin that induces an irreversible spastic paralysis when injected into insects. Modifies presynaptic voltage-gated sodium channels (Nav), causing them to open at the normal resting potential of the nerve. This leads to spontaneous release of neurotransmitter and repetitive action potentials in motor neurons. The polypeptide is U3-agatoxin-Ao1j (Agelena orientalis (Funnel-web spider)).